Reading from the N-terminus, the 429-residue chain is Tol-Pal system protein TolB (429 aa).

The first 21 residues, 1 to 21, serve as a signal peptide directing secretion; the sequence is MKPVFKMLLSLLILWTSLLHA.

Belongs to the TolB family. As to quaternary structure, the Tol-Pal system is composed of five core proteins: the inner membrane proteins TolA, TolQ and TolR, the periplasmic protein TolB and the outer membrane protein Pal. They form a network linking the inner and outer membranes and the peptidoglycan layer.

The protein resides in the periplasm. Its function is as follows. Part of the Tol-Pal system, which plays a role in outer membrane invagination during cell division and is important for maintaining outer membrane integrity. TolB occupies a key intermediary position in the Tol-Pal system because it communicates directly with both membrane-embedded components, Pal in the outer membrane and TolA in the inner membrane. The chain is Tol-Pal system protein TolB from Hamiltonella defensa subsp. Acyrthosiphon pisum (strain 5AT).